Reading from the N-terminus, the 167-residue chain is Photosystem I assembly protein Ycf3 (167 aa).

TPR repeat units lie at residues 35-68, 72-105, and 120-153; these read AFAYYRDGMSAQSEGEYAEALQNYYEAMRLEVDA, SYILYNIGLIHTSNGEHARALEYYYQALERNPSL, and GEQAIEKGQAEISSLLFDKAADYWKEAIRLAPTN.

Belongs to the Ycf3 family.

It localises to the plastid. The protein localises to the chloroplast thylakoid membrane. Essential for the assembly of the photosystem I (PSI) complex. May act as a chaperone-like factor to guide the assembly of the PSI subunits. The chain is Photosystem I assembly protein Ycf3 from Stigeoclonium helveticum (Green alga).